Consider the following 714-residue polypeptide: MAETQVLLETYQGQGNNNATNIEATKAAIKKMLVRIERFQTRVRKHIDENYVDFMPNHTSPDIFLEKSSALGDEISDLLATVGNEGLSVLSDASVELAALSRDLREKLFGLRVSEHILKLDDLFQCVEEAKSTKDCLVVLDLMGRLRSLIYGEGTSDDISPDVERIFQSLECYESIKVKYHVQAHLLQQNLQERFDRLVQLSCKSFPTSKCVTLLISKDEALLQDIVIALFQESYNPTKLCAFLLENCIEPLIQKPVSVEYNVNAKDGTHIQLTLSYSIKEPDTSSLLRPNYKDVFEHFRLLLKTLCGINSSLNGTQHVFTVIGDHVKERMLQLLLDECLIRVPETMDEYNSSTLCEDVAEFEHQLVDTFLINPELDTTLTEFTKQFDTYYRNRLSERVLATAREIIQRDLQDMTLVAPSNLSANVASDPLLFPRCMVSKSAQVDFVKLMERVVRQPDKAAEGTPDPLGGVIGLLLDAYINEVPKVHKKLLKSIPQQSALFYNNCMYLTHWVAQHTKDNIDGFPSLVKILQSTGNKHLRVQVSYQESILMDIMSSFEFENPHTLGTAPLRLVRQCLRQLELLKNVWQQVPAENVYNNSFCELLQAFINELVQRVFSLRDISATMASELSDLIDVVLEKASILFHDKNDVVHVRSWLKLQQLKIMMNASLKEFSELWCDGVGPLTANYHADEIKHLIRALFQDTDRRAKAITQIV.

This sequence belongs to the ZW10 family.

It is found in the cytoplasm. The protein localises to the nucleus. Its subcellular location is the chromosome. It localises to the centromere. The protein resides in the kinetochore. In terms of biological role, required for accurate chromosome segregation. The polypeptide is Centromere/kinetochore protein zw10 (mit(1)15) (Drosophila grimshawi (Hawaiian fruit fly)).